The sequence spans 871 residues: Isoleucine--tRNA ligase (871 aa).

The 'HIGH' region motif lies at 57–67; it reads PYANGNLHMGH. E554 contributes to the L-isoleucyl-5'-AMP binding site. The 'KMSKS' region motif lies at 595–599; sequence KMSKS. Position 598 (K598) interacts with ATP.

Belongs to the class-I aminoacyl-tRNA synthetase family. IleS type 1 subfamily. Monomer.

The protein localises to the cytoplasm. The enzyme catalyses tRNA(Ile) + L-isoleucine + ATP = L-isoleucyl-tRNA(Ile) + AMP + diphosphate. Functionally, catalyzes the attachment of isoleucine to tRNA(Ile). As IleRS can inadvertently accommodate and process structurally similar amino acids such as valine, to avoid such errors it has two additional distinct tRNA(Ile)-dependent editing activities. One activity is designated as 'pretransfer' editing and involves the hydrolysis of activated Val-AMP. The other activity is designated 'posttransfer' editing and involves deacylation of mischarged Val-tRNA(Ile). The sequence is that of Isoleucine--tRNA ligase from Staphylococcus epidermidis.